Here is a 1275-residue protein sequence, read N- to C-terminus: Serine/threonine-protein kinase ULK4 (1275 aa).

In terms of domain architecture, Protein kinase spans 4–280 (FILYEEIGRG…WTRLLQHSFW (277 aa)). 2 disordered regions span residues 299–350 (SRNT…KSTL) and 364–392 (RPTP…TSPL). Positions 336-348 (FRLENPTEFRPKS) are enriched in basic and acidic residues. A compositionally biased stretch (polar residues) spans 364–373 (RPTPRTSTAV). 5 HEAT repeats span residues 842–880 (LKLC…ILSH), 926–964 (STVV…LLVN), 1025–1063 (LVEE…NLVA), 1151–1189 (NRPL…LYGG), and 1213–1253 (PKEQ…LAPG).

It belongs to the protein kinase superfamily. Ser/Thr protein kinase family. APG1/unc-51/ULK1 subfamily. Expressed in the brain, mainly in postmitotic neurons, including GABAergic neurons, but not in astrocytes (at protein level).

It carries out the reaction L-seryl-[protein] + ATP = O-phospho-L-seryl-[protein] + ADP + H(+). It catalyses the reaction L-threonyl-[protein] + ATP = O-phospho-L-threonyl-[protein] + ADP + H(+). Functionally, may be involved in the remodeling of cytoskeletal components, such as alpha-tubulin, and in this way regulates neurite branching and elongation, as well as cell motility. The sequence is that of Serine/threonine-protein kinase ULK4 (ULK4) from Homo sapiens (Human).